A 341-amino-acid chain; its full sequence is ATPase GET3 (341 aa).

Residue 34-41 participates in ATP binding; sequence KGGVGKTT. Residue Asp-63 is part of the active site. Residues Glu-245 and Asn-272 each coordinate ATP. Residues Cys-283 and Cys-286 each coordinate Zn(2+).

It belongs to the arsA ATPase family. As to quaternary structure, homodimer.

The protein resides in the cytoplasm. The protein localises to the endoplasmic reticulum. Functionally, ATPase required for the post-translational delivery of tail-anchored (TA) proteins to the endoplasmic reticulum. Recognizes and selectively binds the transmembrane domain of TA proteins in the cytosol. This complex then targets to the endoplasmic reticulum by membrane-bound receptors, where the tail-anchored protein is released for insertion. This process is regulated by ATP binding and hydrolysis. ATP binding drives the homodimer towards the closed dimer state, facilitating recognition of newly synthesized TA membrane proteins. ATP hydrolysis is required for insertion. Subsequently, the homodimer reverts towards the open dimer state, lowering its affinity for the membrane-bound receptor, and returning it to the cytosol to initiate a new round of targeting. The polypeptide is ATPase GET3 (Ajellomyces dermatitidis (strain ER-3 / ATCC MYA-2586) (Blastomyces dermatitidis)).